Reading from the N-terminus, the 304-residue chain is Dihydroorotate dehydrogenase B (NAD(+)), catalytic subunit (304 aa).

FMN-binding positions include Ser21 and 45–46; that span reads KA. Substrate contacts are provided by residues Lys45 and 69–73; that span reads NAIGL. FMN contacts are provided by Asn99 and Asn127. Asn127 provides a ligand contact to substrate. Residue Cys130 is the Nucleophile of the active site. FMN is bound by residues Lys165 and Ile191. Residue 192-193 participates in substrate binding; sequence NT. FMN contacts are provided by residues Gly217, 243 to 244, and 265 to 266; these read GG and GT.

The protein belongs to the dihydroorotate dehydrogenase family. Type 1 subfamily. Heterotetramer of 2 PyrK and 2 PyrD type B subunits. The cofactor is FMN.

It localises to the cytoplasm. It carries out the reaction (S)-dihydroorotate + NAD(+) = orotate + NADH + H(+). Its pathway is pyrimidine metabolism; UMP biosynthesis via de novo pathway; orotate from (S)-dihydroorotate (NAD(+) route): step 1/1. In terms of biological role, catalyzes the conversion of dihydroorotate to orotate with NAD(+) as electron acceptor. The protein is Dihydroorotate dehydrogenase B (NAD(+)), catalytic subunit (pyrD) of Listeria monocytogenes serotype 4b (strain F2365).